Consider the following 158-residue polypeptide: 3-dehydroquinate dehydratase (158 aa).

Y24 serves as the catalytic Proton acceptor. Positions 75, 81, and 88 each coordinate substrate. H101 serves as the catalytic Proton donor. Substrate-binding positions include L102–S103 and R112.

It belongs to the type-II 3-dehydroquinase family. Homododecamer.

The enzyme catalyses 3-dehydroquinate = 3-dehydroshikimate + H2O. The protein operates within metabolic intermediate biosynthesis; chorismate biosynthesis; chorismate from D-erythrose 4-phosphate and phosphoenolpyruvate: step 3/7. In terms of biological role, catalyzes a trans-dehydration via an enolate intermediate. The protein is 3-dehydroquinate dehydratase of Bartonella bacilliformis (strain ATCC 35685 / KC583 / Herrer 020/F12,63).